The chain runs to 99 residues: EPIDERMAL PATTERNING FACTOR-like protein 8 (99 aa).

A signal peptide spans 1–35 (MDSSRKYKRCGFGAALFVANIFFSLLSLHCISGAH). 3 cysteine pairs are disulfide-bonded: Cys-53-Cys-90, Cys-57-Cys-63, and Cys-60-Cys-92.

The protein belongs to the plant cysteine rich small secretory peptide family. Epidermal patterning factor subfamily.

The protein resides in the secreted. In terms of biological role, controls stomatal patterning. The chain is EPIDERMAL PATTERNING FACTOR-like protein 8 from Arabidopsis thaliana (Mouse-ear cress).